The primary structure comprises 159 residues: Succinate dehydrogenase [ubiquinone] cytochrome b small subunit, mitochondrial (159 aa).

The N-terminal 56 residues, 1–56 (MAVLWRLSAVCGALGGRALLLRTPVVRPAHISAFLQDRPIPEWCGVQHIHLSPSHH), are a transit peptide targeting the mitochondrion. The Mitochondrial matrix portion of the chain corresponds to 57–63 (SGSKAAS). Residues 64–85 (LHWTSERVVSVLLLGLLPAAYL) traverse the membrane as a helical segment. At 86-90 (NPCSA) the chain is on the mitochondrial intermembrane side. A helical membrane pass occupies residues 91-111 (MDYSLAAALTLHGHWGLGQVV). A heme b-binding site is contributed by His-102. The Mitochondrial matrix portion of the chain corresponds to 112–122 (TDYVHGDALQK). Tyr-114 lines the a ubiquinone pocket. Residues 123 to 144 (AAKAGLLALSALTFAGLCYFNY) form a helical membrane-spanning segment. At 145–159 (HDVGICKAVAMLWKL) the chain is on the mitochondrial intermembrane side.

Belongs to the CybS family. As to quaternary structure, component of complex II composed of four subunits: the flavoprotein (FP) SDHA, iron-sulfur protein (IP) SDHB, and a cytochrome b560 composed of SDHC and SDHD.

The protein localises to the mitochondrion inner membrane. The protein operates within carbohydrate metabolism; tricarboxylic acid cycle. Membrane-anchoring subunit of succinate dehydrogenase (SDH) that is involved in complex II of the mitochondrial electron transport chain and is responsible for transferring electrons from succinate to ubiquinone (coenzyme Q). SDH also oxidizes malate to the non-canonical enol form of oxaloacetate, enol-oxaloacetate. Enol-oxaloacetate, which is a potent inhibitor of the succinate dehydrogenase activity, is further isomerized into keto-oxaloacetate. This Homo sapiens (Human) protein is Succinate dehydrogenase [ubiquinone] cytochrome b small subunit, mitochondrial (SDHD).